A 451-amino-acid polypeptide reads, in one-letter code: MLKKNDIVEVEISDLSHDGAGIAKVDGLVFFVDNALPTEKIRMRVLKVKKNIAFGKVESYLAKSAYRSDNLTVDYLRTGIADLGHLTYGQQLNFKRKQVINSLSKIAGISDIEVADTLGMDNPTAYRNKAQVPVRRVNGQLETGFFRKNSHALMPIEDYYIQDKEIDRLINFTRDLLRRFDLKPYDEKEQTGLIRNLVVRRGHYTGQIMLVLVTTRSKIFRIEQMIEKIISEFPAVKSIIQNINDRNTNAIFGSEFRTLYGEDTIEDTMLGNRYIISAQSFYQVNTVMAEKLYQTAIDFSDLTPDDTVIDAYSGIGTIGLSFAKKVKDVYGVEVIEAAVRDAEKNAALNNITNVHYVADSAEKAMASWSKRGIKPDVILVDPPRKGLTESFIEASTAMQPRKITYISCAPATMARDVKLYEELGYKLVKVQPVDLFPQTHHVECVALLVKA.

Positions 1–59 constitute a TRAM domain; the sequence is MLKKNDIVEVEISDLSHDGAGIAKVDGLVFFVDNALPTEKIRMRVLKVKKNIAFGKVES. S-adenosyl-L-methionine-binding residues include Q283, Y312, E333, and D381. C408 acts as the Nucleophile in catalysis.

Belongs to the class I-like SAM-binding methyltransferase superfamily. RNA M5U methyltransferase family.

This is an uncharacterized protein from Streptococcus mutans serotype c (strain ATCC 700610 / UA159).